A 251-amino-acid chain; its full sequence is uncharacterized protein (251 aa).

Positions 21-246 (KGSSPFAFYA…ITYEEFNKQL (226 aa)) constitute an AMMECR1 domain.

This is an uncharacterized protein from Saccharomyces cerevisiae (strain ATCC 204508 / S288c) (Baker's yeast).